The primary structure comprises 661 residues: UvrABC system protein B (661 aa).

Residues 25–178 (EGILKGEKFQ…DEVIRELIRM (154 aa)) form the Helicase ATP-binding domain. Residue 38–45 (GVTGSGKT) participates in ATP binding. A Beta-hairpin motif is present at residues 91–114 (YYDYYQPEAYIPETDTYIEKDSSI). Residues 429–591 (QIDHLIGEIR…IVPQTVRKGI (163 aa)) enclose the Helicase C-terminal domain. In terms of domain architecture, UVR spans 625–660 (EEYIKELEQQMKRFAIELEFEKAAKIRDKIFELKKL).

It belongs to the UvrB family. As to quaternary structure, forms a heterotetramer with UvrA during the search for lesions. Interacts with UvrC in an incision complex.

The protein localises to the cytoplasm. The UvrABC repair system catalyzes the recognition and processing of DNA lesions. A damage recognition complex composed of 2 UvrA and 2 UvrB subunits scans DNA for abnormalities. Upon binding of the UvrA(2)B(2) complex to a putative damaged site, the DNA wraps around one UvrB monomer. DNA wrap is dependent on ATP binding by UvrB and probably causes local melting of the DNA helix, facilitating insertion of UvrB beta-hairpin between the DNA strands. Then UvrB probes one DNA strand for the presence of a lesion. If a lesion is found the UvrA subunits dissociate and the UvrB-DNA preincision complex is formed. This complex is subsequently bound by UvrC and the second UvrB is released. If no lesion is found, the DNA wraps around the other UvrB subunit that will check the other stand for damage. The polypeptide is UvrABC system protein B (Caldicellulosiruptor saccharolyticus (strain ATCC 43494 / DSM 8903 / Tp8T 6331)).